We begin with the raw amino-acid sequence, 245 residues long: MIIVSRAIVLHNTAYNDSYSIAHLFSRESGRVSYLIPRSSKRGKSGGSLRLLISPLNELEITAEHKQHRDLHFIKEAKLCSLHGRIQSDPVRNSIALFLAEFLYLILRLPEADTNLYDFVAFSIDKLEEMDGPMANFHLAFLFRLLVPLGLIPDLQFGGSVIPRWFDPADGRFVPNAPAHGRGIPPHQSTYLQLFRRITFDNMKAFRLSRAERRQVLDYLVDYYRFHLPPFPLLKTPDILSTLFD.

Belongs to the RecO family.

Functionally, involved in DNA repair and RecF pathway recombination. The protein is DNA repair protein RecO of Porphyromonas gingivalis (strain ATCC 33277 / DSM 20709 / CIP 103683 / JCM 12257 / NCTC 11834 / 2561).